The chain runs to 174 residues: DNA endonuclease I-HmuI (174 aa).

This chain is DNA endonuclease I-HmuI, found in Bacillus subtilis (Bacteriophage SP01).